A 311-amino-acid chain; its full sequence is N-acetylmuramic acid 6-phosphate etherase (311 aa).

Residues 64-227 form the SIS domain; that stretch reads IYQRLIDNGR…SSGVMIKLGK (164 aa). Glu-92 acts as the Proton donor in catalysis. Residue Glu-123 is part of the active site.

The protein belongs to the GCKR-like family. MurNAc-6-P etherase subfamily. As to quaternary structure, homodimer.

It catalyses the reaction N-acetyl-D-muramate 6-phosphate + H2O = N-acetyl-D-glucosamine 6-phosphate + (R)-lactate. Its pathway is amino-sugar metabolism; N-acetylmuramate degradation. Specifically catalyzes the cleavage of the D-lactyl ether substituent of MurNAc 6-phosphate, producing GlcNAc 6-phosphate and D-lactate. This is N-acetylmuramic acid 6-phosphate etherase from Prochlorococcus marinus (strain SARG / CCMP1375 / SS120).